The sequence spans 167 residues: Methylated-DNA--protein-cysteine methyltransferase (167 aa).

The active-site Nucleophile; methyl group acceptor is the C128.

This sequence belongs to the MGMT family.

It localises to the cytoplasm. The enzyme catalyses a 6-O-methyl-2'-deoxyguanosine in DNA + L-cysteinyl-[protein] = S-methyl-L-cysteinyl-[protein] + a 2'-deoxyguanosine in DNA. The catalysed reaction is a 4-O-methyl-thymidine in DNA + L-cysteinyl-[protein] = a thymidine in DNA + S-methyl-L-cysteinyl-[protein]. Functionally, involved in the cellular defense against the biological effects of O6-methylguanine (O6-MeG) and O4-methylthymine (O4-MeT) in DNA. Repairs the methylated nucleobase in DNA by stoichiometrically transferring the methyl group to a cysteine residue in the enzyme. This is a suicide reaction: the enzyme is irreversibly inactivated. The polypeptide is Methylated-DNA--protein-cysteine methyltransferase (Methanocaldococcus jannaschii (strain ATCC 43067 / DSM 2661 / JAL-1 / JCM 10045 / NBRC 100440) (Methanococcus jannaschii)).